Consider the following 59-residue polypeptide: MAKLKITLVRSLIGRPEAQRKVVRALGLGKTNSMVEQNDSPIIRGMINKVAHLVKVEEA.

Belongs to the universal ribosomal protein uL30 family. As to quaternary structure, part of the 50S ribosomal subunit.

This Desulforamulus reducens (strain ATCC BAA-1160 / DSM 100696 / MI-1) (Desulfotomaculum reducens) protein is Large ribosomal subunit protein uL30.